The following is a 210-amino-acid chain: Na(+)-translocating NADH-quinone reductase subunit D (210 aa).

The next 6 helical transmembrane spans lie at P14–V34, L42–I62, I72–A92, V103–M123, F131–V151, and N178–I198.

This sequence belongs to the NqrDE/RnfAE family. In terms of assembly, composed of six subunits; NqrA, NqrB, NqrC, NqrD, NqrE and NqrF.

Its subcellular location is the cell inner membrane. The enzyme catalyses a ubiquinone + n Na(+)(in) + NADH + H(+) = a ubiquinol + n Na(+)(out) + NAD(+). Its function is as follows. NQR complex catalyzes the reduction of ubiquinone-1 to ubiquinol by two successive reactions, coupled with the transport of Na(+) ions from the cytoplasm to the periplasm. NqrA to NqrE are probably involved in the second step, the conversion of ubisemiquinone to ubiquinol. The polypeptide is Na(+)-translocating NADH-quinone reductase subunit D (Shewanella oneidensis (strain ATCC 700550 / JCM 31522 / CIP 106686 / LMG 19005 / NCIMB 14063 / MR-1)).